The following is an 87-amino-acid chain: Small ribosomal subunit protein uS15c (87 aa).

Residues 1–20 form a disordered region; sequence MNQNLSIRKRNKLKQDSGSP.

The protein belongs to the universal ribosomal protein uS15 family. In terms of assembly, part of the 30S ribosomal subunit.

The protein resides in the plastid. It is found in the chloroplast. In Zygnema circumcarinatum (Green alga), this protein is Small ribosomal subunit protein uS15c (rps15).